We begin with the raw amino-acid sequence, 95 residues long: Aspartyl/glutamyl-tRNA(Asn/Gln) amidotransferase subunit C (95 aa).

Belongs to the GatC family. Heterotrimer of A, B and C subunits.

The enzyme catalyses L-glutamyl-tRNA(Gln) + L-glutamine + ATP + H2O = L-glutaminyl-tRNA(Gln) + L-glutamate + ADP + phosphate + H(+). It catalyses the reaction L-aspartyl-tRNA(Asn) + L-glutamine + ATP + H2O = L-asparaginyl-tRNA(Asn) + L-glutamate + ADP + phosphate + 2 H(+). Its function is as follows. Allows the formation of correctly charged Asn-tRNA(Asn) or Gln-tRNA(Gln) through the transamidation of misacylated Asp-tRNA(Asn) or Glu-tRNA(Gln) in organisms which lack either or both of asparaginyl-tRNA or glutaminyl-tRNA synthetases. The reaction takes place in the presence of glutamine and ATP through an activated phospho-Asp-tRNA(Asn) or phospho-Glu-tRNA(Gln). In Dehalococcoides mccartyi (strain ATCC BAA-2266 / KCTC 15142 / 195) (Dehalococcoides ethenogenes (strain 195)), this protein is Aspartyl/glutamyl-tRNA(Asn/Gln) amidotransferase subunit C.